Consider the following 118-residue polypeptide: Evasin P546 (118 aa).

Residues 1–21 (MKVLLYIAASCLMLLALNVSA) form the signal peptide. 4 disulfides stabilise this stretch: Cys38/Cys59, Cys55/Cys96, Cys72/Cys101, and Cys91/Cys110. Asn45 carries an N-linked (GlcNAc...) asparagine glycan.

It localises to the secreted. Its function is as follows. Salivary chemokine-binding protein which binds to host chemokines CCL1, CCL3, CCL5 and CCL22. In Amblyomma cajennense (Cayenne tick), this protein is Evasin P546.